A 68-amino-acid polypeptide reads, in one-letter code: Large ribosomal subunit protein bL31 (68 aa).

Residues Cys-16, Cys-18, Cys-38, and Cys-41 each contribute to the Zn(2+) site.

The protein belongs to the bacterial ribosomal protein bL31 family. Type A subfamily. In terms of assembly, part of the 50S ribosomal subunit. It depends on Zn(2+) as a cofactor.

Binds the 23S rRNA. The sequence is that of Large ribosomal subunit protein bL31 from Thiobacillus denitrificans (strain ATCC 25259 / T1).